The sequence spans 156 residues: Aspercryptin biosynthesis cluster protein B (156 aa).

The first 39 residues, 1 to 39 (MRMANRIGAGRKSALQLSHLRTRLTSSAAAVATAPTLDP), serve as a signal peptide directing secretion.

The protein belongs to the YciI family.

It functions in the pathway secondary metabolite biosynthesis. Part of the gene cluster that mediates the biosynthesis of aspercryptins, linear lipopeptides built from six amino acids including 2 highly unusual and nonproteogenic amino acids, 2-amino-octanoic acid (2aoa) and 2-amino-dodecanol (2adol). The core structure of aspercryptins is as follows: Ser/Ala-Thr-Ile/Val-2aoa-Aasn-2adol. The first step of aspercryptin biosynthesis is the generation of the fatty acid precursors, octanoic and dodecanoic acids, by the FAS subunits atnF and atnM. The fatty acid precursors are likely transformed into the corresponding alpha-amino fatty acids in three steps. First, they are hydroxylated by the cytochrome P450 monooxygenase atnE, then oxidized to the corresponding alpha-keto acids by the NAD(P)-dependent oxidoreductase atnD, and finally converted to the alpha-amino fatty acids by the PLP-dependent aminotransferases atnH or atnJ. the alpha-amino fatty acids, 2-amino-octanoic and 2-amino-dodecanoic acids, are recognized, activated, and covalently tethered to the NRPS atnA by its fourth and sixth adenylation domains. The second module of atnA is the Thr module and contains an epimerase (E) domain responsible for the epimerization of Thr to D-allo-Thr. Additionally, despite atnA having only one epimerase domain, the first amino acid of aspercryptin A1 is D-Ser, suggesting that serine is either loaded directly as D-Ser on the first module or that the epimerase domain in the threonine module epimerizes both L-Ser and L-Thr. After condensation of the hexapeptide of aspercryptin, the C-terminal reductase (TE) domain might be involved in the reductive release and production of the aldehyde hexapeptide. Further reduction would generate aspercryptins. The variety of aspercryptins produced reflects the flexibility of the atnA NRPS, allowing incorporation of alanine instead of serine, valine for isoleucine, and a C10 fatty amino alcohol instead of the C12 version. AtnB seems to be involved in the selectivity for Ile versus Val by the third module. Moreover, type B, C and D aspercryptins have an additional N-terminal cichorine, acetyl and propionyl group respectively. This Emericella nidulans (strain FGSC A4 / ATCC 38163 / CBS 112.46 / NRRL 194 / M139) (Aspergillus nidulans) protein is Aspercryptin biosynthesis cluster protein B.